The following is a 258-amino-acid chain: UPF0328 protein ECU02_0090 (258 aa).

It belongs to the UPF0328 family.

The sequence is that of UPF0328 protein ECU02_0090 from Encephalitozoon cuniculi (strain GB-M1) (Microsporidian parasite).